The primary structure comprises 403 residues: Blue light- and temperature-regulated antirepressor BluF (403 aa).

Positions 2–93 constitute a BLUF domain; the sequence is LTTLIYRSHI…ARRFGKAGME (92 aa). Positions 98 to 144 are joining helix; sequence RLHERDDVLQAVFDKGTSKFQLTYDDRALQFFRTFVLATEQSTYFEI. The EAL domain maps to 155-403; the sequence is DGSDKELDSC…IPSIAWPEKK (249 aa).

As to quaternary structure, monomer, it undergoes transient dimerization following photoexcitation or upon temperature reduction, with a relaxation time of about 2 minutes. The dimer may be the inactive state. Interacts with the N- and C-terminal domains of BluR. Can also interact with the C-terminal domain of MlrA. The cofactor is FAD.

Its function is as follows. Binds to and releases the BluR repressor from its bound DNA target in a blue light-dependent (470 nm) fashion. A shift to low temperature also triggers a BluF-mediated relief of repression by BluR, suggesting BluF may serve as a thermometer. Blue light may act to increase the affinity of BluF for BluR, allowing it to be released from its operator. The protein has a reversible photocycle, and undergoes structural changes, probably in the EAL domain, in response to light. This Escherichia coli (strain K12) protein is Blue light- and temperature-regulated antirepressor BluF.